We begin with the raw amino-acid sequence, 162 residues long: Allantoicase (162 aa).

The protein belongs to the allantoicase family. In terms of assembly, homohexamer. In terms of tissue distribution, expressed in zygote.

It catalyses the reaction allantoate + H2O = (S)-ureidoglycolate + urea. It participates in nitrogen metabolism; (S)-allantoin degradation; (S)-ureidoglycolate from allantoate (aminidohydrolase route): step 1/1. Catalyzes the degradation of allantoate to (-)-ureidoglycolate and (+)-ureidoglycolate to glyoxylate. The protein is Allantoicase of Chlamydomonas reinhardtii (Chlamydomonas smithii).